The chain runs to 957 residues: Glycine dehydrogenase (decarboxylating) (957 aa).

Lys708 carries the post-translational modification N6-(pyridoxal phosphate)lysine.

The protein belongs to the GcvP family. In terms of assembly, the glycine cleavage system is composed of four proteins: P, T, L and H. It depends on pyridoxal 5'-phosphate as a cofactor.

The enzyme catalyses N(6)-[(R)-lipoyl]-L-lysyl-[glycine-cleavage complex H protein] + glycine + H(+) = N(6)-[(R)-S(8)-aminomethyldihydrolipoyl]-L-lysyl-[glycine-cleavage complex H protein] + CO2. The glycine cleavage system catalyzes the degradation of glycine. The P protein binds the alpha-amino group of glycine through its pyridoxal phosphate cofactor; CO(2) is released and the remaining methylamine moiety is then transferred to the lipoamide cofactor of the H protein. The protein is Glycine dehydrogenase (decarboxylating) of Shigella boydii serotype 18 (strain CDC 3083-94 / BS512).